The primary structure comprises 177 residues: MEERNHENTLEKDLEAVGQEAQALEERLKAAEEELKGLKDKYLRLLADFDNYRKRMEEELKAREREGVLKALRALLPVLDDLDRALEFAEASPESIRQGVRAIRDGFFRILAGLGVEEVPGEGEAFDPRYHEAVGLLPGEPGKVAKVFQRGFRMGEALVRPARVAVGEEKQEEADLE.

Belongs to the GrpE family. As to quaternary structure, homodimer.

It is found in the cytoplasm. Participates actively in the response to hyperosmotic and heat shock by preventing the aggregation of stress-denatured proteins, in association with DnaK and GrpE. It is the nucleotide exchange factor for DnaK and may function as a thermosensor. Unfolded proteins bind initially to DnaJ; upon interaction with the DnaJ-bound protein, DnaK hydrolyzes its bound ATP, resulting in the formation of a stable complex. GrpE releases ADP from DnaK; ATP binding to DnaK triggers the release of the substrate protein, thus completing the reaction cycle. Several rounds of ATP-dependent interactions between DnaJ, DnaK and GrpE are required for fully efficient folding. The polypeptide is Protein GrpE (Thermus thermophilus (strain ATCC BAA-163 / DSM 7039 / HB27)).